A 177-amino-acid chain; its full sequence is Adenine phosphoribosyltransferase (177 aa).

This sequence belongs to the purine/pyrimidine phosphoribosyltransferase family. Homodimer.

It is found in the cytoplasm. The catalysed reaction is AMP + diphosphate = 5-phospho-alpha-D-ribose 1-diphosphate + adenine. It participates in purine metabolism; AMP biosynthesis via salvage pathway; AMP from adenine: step 1/1. Catalyzes a salvage reaction resulting in the formation of AMP, that is energically less costly than de novo synthesis. The sequence is that of Adenine phosphoribosyltransferase from Anaeromyxobacter sp. (strain Fw109-5).